The chain runs to 184 residues: ATP synthase subunit b, chloroplastic (184 aa).

The chain crosses the membrane as a helical span at residues 29–49 (INIINLGIVIGLLVYLGEGVL).

It belongs to the ATPase B chain family. As to quaternary structure, F-type ATPases have 2 components, F(1) - the catalytic core - and F(0) - the membrane proton channel. F(1) has five subunits: alpha(3), beta(3), gamma(1), delta(1), epsilon(1). F(0) has four main subunits: a(1), b(1), b'(1) and c(10-14). The alpha and beta chains form an alternating ring which encloses part of the gamma chain. F(1) is attached to F(0) by a central stalk formed by the gamma and epsilon chains, while a peripheral stalk is formed by the delta, b and b' chains.

The protein localises to the plastid. The protein resides in the chloroplast thylakoid membrane. In terms of biological role, f(1)F(0) ATP synthase produces ATP from ADP in the presence of a proton or sodium gradient. F-type ATPases consist of two structural domains, F(1) containing the extramembraneous catalytic core and F(0) containing the membrane proton channel, linked together by a central stalk and a peripheral stalk. During catalysis, ATP synthesis in the catalytic domain of F(1) is coupled via a rotary mechanism of the central stalk subunits to proton translocation. Component of the F(0) channel, it forms part of the peripheral stalk, linking F(1) to F(0). The protein is ATP synthase subunit b, chloroplastic of Psilotum nudum (Whisk fern).